We begin with the raw amino-acid sequence, 376 residues long: MADSRRVIIASWYRTFMGIVNLFGLETKTCWNVTRIEPLNEVQSCEGLRDPACFYVGVIFILNGLMMGLFFIYGTYLSGTELGGLITVLCFFFNHGEATCVMWTPPLRESFSYPFLVLQMYVLTLILRTSSNDRRPFIALCLSNVAFMLPWQFAQFILFTQIASLFPMYVVGYIEPSKFQKIIYMNMISVTLSFILMFGNSMYLSSYYSSSLLMTWAIILKRNEIQKLGVSKLNCWLIQGSAWWCGTIILKFLTSKILGVSDHICLSDLIAAGILRYTDFDTLKYTCSPEFDFMEKATLLIYTKTLLLPVVMVITCFIFKKTVGDISRVLATNVYLRCCLCRCHAYNGKCQAVYTSSHCESSTLRRCRLEAWLQHA.

An N-linked (GlcNAc...) asparagine glycan is attached at asparagine 32. Helical transmembrane passes span 52–72 (ACFY…LFFI), 107–127 (LRES…TLIL), 154–174 (AQFI…VGYI), 182–202 (IIYM…GNSM), 233–253 (LNCW…LKFL), and 299–319 (LLIY…CFIF).

This sequence belongs to the dpy-19 family. In terms of tissue distribution, fibroblast, lung, lymphoblast, spleen and testis.

It is found in the membrane. Probable C-mannosyltransferase that mediates C-mannosylation of tryptophan residues on target proteins. This Homo sapiens (Human) protein is Putative C-mannosyltransferase DPY19L2P2 (DPY19L2P2).